Reading from the N-terminus, the 151-residue chain is Transcriptional regulator MraZ (151 aa).

SpoVT-AbrB domains are found at residues 5–52 (ANAI…PLSE) and 81–124 (AVDL…DEDA).

Belongs to the MraZ family. In terms of assembly, forms oligomers.

The protein localises to the cytoplasm. The protein resides in the nucleoid. This is Transcriptional regulator MraZ from Pseudomonas syringae pv. syringae (strain B728a).